Reading from the N-terminus, the 449-residue chain is Xylose isomerase (449 aa).

Active-site residues include histidine 103 and aspartate 106. Positions 234, 270, 273, 298, 309, 311, and 342 each coordinate Mg(2+).

This sequence belongs to the xylose isomerase family. As to quaternary structure, homotetramer. The cofactor is Mg(2+).

The protein resides in the cytoplasm. It carries out the reaction alpha-D-xylose = alpha-D-xylulofuranose. Involved in D-xylose catabolism. The polypeptide is Xylose isomerase (xylA) (Lactiplantibacillus pentosus (Lactobacillus pentosus)).